A 423-amino-acid polypeptide reads, in one-letter code: 3-phosphoshikimate 1-carboxyvinyltransferase (423 aa).

Positions 28, 29, and 33 each coordinate 3-phosphoshikimate. K28 provides a ligand contact to phosphoenolpyruvate. The phosphoenolpyruvate site is built by G96 and R124. The 3-phosphoshikimate site is built by S169, S170, Q171, S198, E312, and H339. Q171 contacts phosphoenolpyruvate. The Proton acceptor role is filled by E312. Phosphoenolpyruvate is bound by residues R343, R384, and K409.

This sequence belongs to the EPSP synthase family. In terms of assembly, monomer.

It is found in the cytoplasm. The enzyme catalyses 3-phosphoshikimate + phosphoenolpyruvate = 5-O-(1-carboxyvinyl)-3-phosphoshikimate + phosphate. Its pathway is metabolic intermediate biosynthesis; chorismate biosynthesis; chorismate from D-erythrose 4-phosphate and phosphoenolpyruvate: step 6/7. Catalyzes the transfer of the enolpyruvyl moiety of phosphoenolpyruvate (PEP) to the 5-hydroxyl of shikimate-3-phosphate (S3P) to produce enolpyruvyl shikimate-3-phosphate and inorganic phosphate. The sequence is that of 3-phosphoshikimate 1-carboxyvinyltransferase from Acidothermus cellulolyticus (strain ATCC 43068 / DSM 8971 / 11B).